A 409-amino-acid polypeptide reads, in one-letter code: Arginine deiminase (409 aa).

Cysteine 399 functions as the Amidino-cysteine intermediate in the catalytic mechanism.

It belongs to the arginine deiminase family.

The protein resides in the cytoplasm. It carries out the reaction L-arginine + H2O = L-citrulline + NH4(+). It functions in the pathway amino-acid degradation; L-arginine degradation via ADI pathway; carbamoyl phosphate from L-arginine: step 1/2. This chain is Arginine deiminase (arcA), found in Latilactobacillus sakei (Lactobacillus sakei).